The primary structure comprises 315 residues: HVA22-like protein h (315 aa).

The disordered stretch occupies residues 148–315; sequence PKPKPKEKKQ…RKARSAGAPR (168 aa). Polar residues predominate over residues 173 to 190; sequence ATSQAASSNPQVRLQSKK. The segment covering 234–248 has biased composition (pro residues); sequence PPGPPPPPPPPPPSP.

Belongs to the DP1 family.

This Arabidopsis thaliana (Mouse-ear cress) protein is HVA22-like protein h (HVA22H).